Here is a 190-residue protein sequence, read N- to C-terminus: Glycerol-3-phosphate acyltransferase 2 (190 aa).

5 helical membrane passes run 1 to 21 (MNIL…ALIV), 53 to 73 (VIVA…PLIL), 76 to 96 (TINP…SVFA), 110 to 130 (VFLF…VLTL), and 152 to 172 (LIFE…SIII).

Belongs to the PlsY family. As to quaternary structure, probably interacts with PlsX.

Its subcellular location is the cell membrane. The catalysed reaction is an acyl phosphate + sn-glycerol 3-phosphate = a 1-acyl-sn-glycero-3-phosphate + phosphate. It functions in the pathway lipid metabolism; phospholipid metabolism. Catalyzes the transfer of an acyl group from acyl-phosphate (acyl-PO(4)) to glycerol-3-phosphate (G3P) to form lysophosphatidic acid (LPA). This enzyme utilizes acyl-phosphate as fatty acyl donor, but not acyl-CoA or acyl-ACP. The chain is Glycerol-3-phosphate acyltransferase 2 from Bacillus anthracis.